Here is a 433-residue protein sequence, read N- to C-terminus: E1B 55 kDa protein (433 aa).

This sequence belongs to the adenoviridae E1B 55 kDa protein family. Interacts with host PML-4 and PML-5; this interaction promotes efficient subnuclear targeting of E1B-55K to PML nuclear bodies. Interacts with E4-ORF3 protein. Interacts with E4-ORF6 protein.

The protein localises to the host nucleus. Its subcellular location is the host cytoplasm. In terms of biological role, plays a major role to prevent cellular inhibition of viral genome replication. Assembles an SCF-like E3 ubiquitin ligase complex based on the cellular proteins ELOB, ELOC, CUL5 and RBX1, in cooperation with viral E4orf6. This viral RING-type ligase ubiquitinates cellular substrates and targets them to proteasomal degradation: TP53/p53, LIG4, MRE11-RAD50-NBS1 (MRN) complex, ITGA3, DAXX and BLM. E1B-55K probably acts as the substrate-specific adapter of the SCF-like E3 ubiquitin ligase complex. Degradation of host TP53/p53 activity is essential for preventing E1A-induced TP53 accumulation that would otherwise lead to cell apoptosis and growth arrest. E1B-55K also inactivates TP53 transcription-factor activity by binding its transactivation domain. E1B-55K also functions as a SUMO1 E3 ligase for TP53 which causes the latter to be sequestered in promyelocytic leukemia (PML) nuclear bodies thereby contributing to maximal inhibition of TP53 function. This chain is E1B 55 kDa protein, found in Murine adenovirus A serotype 1 (MAdV-1).